The primary structure comprises 1078 residues: DNA gyrase subunit B (1078 aa).

The Toprim domain maps to 889–974; that stretch reads GKILNIEKTD…QGYIYIACPP (86 aa). Mg(2+) contacts are provided by glutamate 895, aspartate 939, and aspartate 941.

The protein belongs to the type II topoisomerase GyrB family. In terms of assembly, heterotetramer, composed of two GyrA and two GyrB chains. In the heterotetramer, GyrA contains the active site tyrosine that forms a transient covalent intermediate with DNA, while GyrB binds cofactors and catalyzes ATP hydrolysis. It depends on Mg(2+) as a cofactor. Post-translationally, this protein undergoes a protein self splicing that involves a post-translational excision of the intervening region (intein) followed by peptide ligation.

It is found in the cytoplasm. The enzyme catalyses ATP-dependent breakage, passage and rejoining of double-stranded DNA.. A type II topoisomerase that negatively supercoils closed circular double-stranded (ds) DNA in an ATP-dependent manner to modulate DNA topology and maintain chromosomes in an underwound state. Negative supercoiling favors strand separation, and DNA replication, transcription, recombination and repair, all of which involve strand separation. Also able to catalyze the interconversion of other topological isomers of dsDNA rings, including catenanes and knotted rings. Type II topoisomerases break and join 2 DNA strands simultaneously in an ATP-dependent manner. In Synechocystis sp. (strain ATCC 27184 / PCC 6803 / Kazusa), this protein is DNA gyrase subunit B (gyrB).